The sequence spans 89 residues: uncharacterized protein (89 aa).

The segment at Thr-31–Val-89 is disordered. Over residues Glu-36–Arg-58 the composition is skewed to basic and acidic residues. A compositionally biased stretch (pro residues) spans Asn-59–Val-69.

This is an uncharacterized protein from Dictyostelium discoideum (Social amoeba).